The chain runs to 534 residues: Melanopsin-B (534 aa).

Residues 1-32 are Extracellular-facing; that stretch reads MDLGKTVEYGTHRQDAIAQIDVPDQVLYTIGS. Residues 33–53 traverse the membrane as a helical segment; that stretch reads FILIIGSVGIIGNMLVLYAFY. The Cytoplasmic portion of the chain corresponds to 54–64; that stretch reads RNKKLRTAPNY. A helical membrane pass occupies residues 65 to 85; sequence FIINLAISDFLMSATQAPVCF. The Extracellular segment spans residues 86–102; that stretch reads LSSLHREWILGDIGCNV. C100 and C178 are disulfide-bonded. Residues 103–123 form a helical membrane-spanning segment; sequence YAFCGALFGITSMMTLLAISI. The Cytoplasmic portion of the chain corresponds to 124 to 146; sequence NRYIVITKPLQSIQWSSKKRTSQ. The chain crosses the membrane as a helical span at residues 147 to 167; sequence IIVLVWMYSLMWSLAPLLGWS. Residues 168–198 lie on the Extracellular side of the membrane; sequence SYVPEGLRISCTWDYVTSTMSNRSYTMMLCC. N189 carries N-linked (GlcNAc...) asparagine glycosylation. A helical membrane pass occupies residues 199-219; sequence CVFFIPLIVISHCYLFMFLAI. The Cytoplasmic segment spans residues 220-250; that stretch reads RSTGRNVQKLGSYGRQSFLSQSMKNEWKMAK. Residues 251 to 271 form a helical membrane-spanning segment; that stretch reads IAFVIIIVFVLSWSPYACVTL. Residues 272 to 286 lie on the Extracellular side of the membrane; sequence IAWAGHGKSLTPYSK. Residues 287–307 form a helical membrane-spanning segment; that stretch reads TVPAVIAKASAIYNPIIYGII. Residue K294 is modified to N6-(retinylidene)lysine. Over 308–534 the chain is Cytoplasmic; the sequence is HPKYRETIHK…LYEVVERFLS (227 aa). Residues 478 to 501 are disordered; the sequence is SNISETKEEHDNNSEEKSKRTEEE. Basic and acidic residues predominate over residues 482-499; the sequence is ETKEEHDNNSEEKSKRTE.

It belongs to the G-protein coupled receptor 1 family. Opsin subfamily. As to expression, highest level in the iris, high level in the inner nuclear layer, possibly in horizontal cells, and lowest level in retinal pigment epithelium. Expressed in melanophore cells of the skin.

The protein resides in the cell membrane. Photoreceptor implicated in non-image-forming responses to light. May be able to isomerize covalently bound all-trans retinal back to 11-cis retinal. The sequence is that of Melanopsin-B from Xenopus laevis (African clawed frog).